Here is a 359-residue protein sequence, read N- to C-terminus: Homoserine O-acetyltransferase (359 aa).

Residues 49 to 332 form the AB hydrolase-1 domain; it reads VLICHALTGS…QSSYGHDAFL (284 aa). Ser143 functions as the Nucleophile in the catalytic mechanism. Arg212 is a binding site for substrate. Residues Asp299 and His328 contribute to the active site. Position 329 (Asp329) interacts with substrate.

This sequence belongs to the AB hydrolase superfamily. MetX family. In terms of assembly, homodimer.

The protein resides in the cytoplasm. The enzyme catalyses L-homoserine + acetyl-CoA = O-acetyl-L-homoserine + CoA. It participates in amino-acid biosynthesis; L-methionine biosynthesis via de novo pathway; O-acetyl-L-homoserine from L-homoserine: step 1/1. Transfers an acetyl group from acetyl-CoA to L-homoserine, forming acetyl-L-homoserine. This Trichormus variabilis (strain ATCC 29413 / PCC 7937) (Anabaena variabilis) protein is Homoserine O-acetyltransferase.